Reading from the N-terminus, the 272-residue chain is Putative phosphoenolpyruvate synthase regulatory protein (272 aa).

152–159 serves as a coordination point for ADP; that stretch reads GVSRCGKT.

The protein belongs to the pyruvate, phosphate/water dikinase regulatory protein family. PSRP subfamily.

The enzyme catalyses [pyruvate, water dikinase] + ADP = [pyruvate, water dikinase]-phosphate + AMP + H(+). It carries out the reaction [pyruvate, water dikinase]-phosphate + phosphate + H(+) = [pyruvate, water dikinase] + diphosphate. In terms of biological role, bifunctional serine/threonine kinase and phosphorylase involved in the regulation of the phosphoenolpyruvate synthase (PEPS) by catalyzing its phosphorylation/dephosphorylation. The protein is Putative phosphoenolpyruvate synthase regulatory protein of Pseudomonas fluorescens (strain Pf0-1).